The following is a 184-amino-acid chain: dITP/XTP pyrophosphatase (184 aa).

8-13 (TGNKGK) contributes to the substrate binding site. Residues E37 and D66 each contribute to the Mg(2+) site. The Proton acceptor role is filled by D66. Substrate-binding positions include S67, 142 to 145 (FGYD), K163, and 168 to 169 (HR).

It belongs to the HAM1 NTPase family. As to quaternary structure, homodimer. Mg(2+) is required as a cofactor.

The catalysed reaction is XTP + H2O = XMP + diphosphate + H(+). The enzyme catalyses dITP + H2O = dIMP + diphosphate + H(+). It catalyses the reaction ITP + H2O = IMP + diphosphate + H(+). Functionally, pyrophosphatase that catalyzes the hydrolysis of nucleoside triphosphates to their monophosphate derivatives, with a high preference for the non-canonical purine nucleotides XTP (xanthosine triphosphate), dITP (deoxyinosine triphosphate) and ITP. Seems to function as a house-cleaning enzyme that removes non-canonical purine nucleotides from the nucleotide pool, thus preventing their incorporation into DNA/RNA and avoiding chromosomal lesions. This chain is dITP/XTP pyrophosphatase, found in Methanosarcina mazei (strain ATCC BAA-159 / DSM 3647 / Goe1 / Go1 / JCM 11833 / OCM 88) (Methanosarcina frisia).